A 475-amino-acid chain; its full sequence is MSPQTETKTGVGFKAGVKEYKLNYYTPEYETKDTDILAAFRVTPQPGVPPEEAGAAVAAESSTGTWTTVWTDGLTSLDRYKGRCYDIEPVAGEENQFIAYVAYPLDLFEEGSVTNMFTSIVGNVFGFKALRALRLEDLRIPPAYTKTFQGPPHGIQVERDKLNKYGRPLLGCTIKPKLGLSAKNYGRAVYECLRGGLDFTKDDENVNSQPFMRWRDRFLFCAEALYKAQTETGEIKGHYLNATAGTCEEMMKRAIFARELGVPIVMHDYLTGGFTANTSLAHYCRDNGLLLHIHRAMHAVIDRQKNHGIHFRVLAKALRMSGGDHIHSGTVVGKLEGERDITLGFVDLLRDDFVEKDRSRGIYFTQDWVSLPGVLPVASGGIHVWHMPALTEIFGDDSVLQFGGGTLGHPWGNAPGAVANRVALEACVQARNEGRDLAREGNEIIREASKWSPELAAACEVWKEIKFEFEAMDTL.

Positions 1–2 (MS) are excised as a propeptide. An N-acetylproline modification is found at proline 3. Lysine 14 carries the post-translational modification N6,N6,N6-trimethyllysine. Positions 123 and 173 each coordinate substrate. The active-site Proton acceptor is the lysine 175. Position 177 (lysine 177) interacts with substrate. Positions 201, 203, and 204 each coordinate Mg(2+). Lysine 201 carries the N6-carboxylysine modification. Histidine 294 acts as the Proton acceptor in catalysis. The substrate site is built by arginine 295, histidine 327, and serine 379.

This sequence belongs to the RuBisCO large chain family. Type I subfamily. As to quaternary structure, heterohexadecamer of 8 large chains and 8 small chains; disulfide-linked. The disulfide link is formed within the large subunit homodimers. It depends on Mg(2+) as a cofactor. The disulfide bond which can form in the large chain dimeric partners within the hexadecamer appears to be associated with oxidative stress and protein turnover.

It localises to the plastid. It is found in the chloroplast. It carries out the reaction 2 (2R)-3-phosphoglycerate + 2 H(+) = D-ribulose 1,5-bisphosphate + CO2 + H2O. The catalysed reaction is D-ribulose 1,5-bisphosphate + O2 = 2-phosphoglycolate + (2R)-3-phosphoglycerate + 2 H(+). RuBisCO catalyzes two reactions: the carboxylation of D-ribulose 1,5-bisphosphate, the primary event in carbon dioxide fixation, as well as the oxidative fragmentation of the pentose substrate in the photorespiration process. Both reactions occur simultaneously and in competition at the same active site. The polypeptide is Ribulose bisphosphate carboxylase large chain (Populus tremuloides (Quaking aspen)).